The sequence spans 630 residues: 1-deoxy-D-xylulose-5-phosphate synthase (630 aa).

Residues His-75 and 116–118 (GHS) contribute to the thiamine diphosphate site. Residue Asp-147 participates in Mg(2+) binding. Residues 148-149 (GA), Asn-176, Tyr-287, and Glu-367 contribute to the thiamine diphosphate site. Asn-176 serves as a coordination point for Mg(2+).

The protein belongs to the transketolase family. DXPS subfamily. In terms of assembly, homodimer. The cofactor is Mg(2+). Requires thiamine diphosphate as cofactor.

It catalyses the reaction D-glyceraldehyde 3-phosphate + pyruvate + H(+) = 1-deoxy-D-xylulose 5-phosphate + CO2. It functions in the pathway metabolic intermediate biosynthesis; 1-deoxy-D-xylulose 5-phosphate biosynthesis; 1-deoxy-D-xylulose 5-phosphate from D-glyceraldehyde 3-phosphate and pyruvate: step 1/1. In terms of biological role, catalyzes the acyloin condensation reaction between C atoms 2 and 3 of pyruvate and glyceraldehyde 3-phosphate to yield 1-deoxy-D-xylulose-5-phosphate (DXP). The sequence is that of 1-deoxy-D-xylulose-5-phosphate synthase from Treponema pallidum (strain Nichols).